The primary structure comprises 2763 residues: Large tegument protein deneddylase (2763 aa).

The segment at 1 to 247 (MDIIPPIAVT…CDTYFTDEQY (247 aa)) is deubiquitination activity. The region spanning 12 to 237 (AGVGSRNQFD…SSAVTLIYGS (226 aa)) is the Peptidase C76 domain. Residues Cys-32, Asp-168, and His-170 contribute to the active site. The segment at 495–523 (LELFINLTILRLTGFVVENGTRTHHGATS) is interaction with inner tegument protein. The tract at residues 2456 to 2476 (VRPAQPAQPAQPAQPAQTVQP) is disordered. Repeat copies occupy residues 2458 to 2460 (PAQ), 2461 to 2463 (PAQ), 2464 to 2466 (PAQ), 2467 to 2469 (PAQ), and 2470 to 2472 (PAQ). The interval 2458–2472 (PAQPAQPAQPAQPAQ) is 5 X 3 AA repeats of P-A-Q. The span at 2459–2476 (AQPAQPAQPAQPAQTVQP) shows a compositional bias: low complexity.

This sequence belongs to the herpesviridae large tegument protein family. As to quaternary structure, interacts with host CUL1 and CUL4A; these interactions inhibit the E3 ligase activity of cullins. Interacts with inner tegument protein. Interacts with capsid vertex specific component CVC2. Interacts with the major capsid protein/MCP.

The protein resides in the virion tegument. It is found in the host cytoplasm. The protein localises to the host nucleus. The enzyme catalyses Thiol-dependent hydrolysis of ester, thioester, amide, peptide and isopeptide bonds formed by the C-terminal Gly of ubiquitin (a 76-residue protein attached to proteins as an intracellular targeting signal).. Its function is as follows. Large tegument protein that plays multiple roles in the viral cycle. During viral entry, remains associated with the capsid while most of the tegument is detached and participates in the capsid transport toward the host nucleus. Plays a role in the routing of the capsid at the nuclear pore complex and subsequent uncoating. Within the host nucleus, acts as a deneddylase and promotes the degradation of nuclear CRLs (cullin-RING ubiquitin ligases) and thereby stabilizes nuclear CRL substrates, while cytoplasmic CRLs remain unaffected. These modifications prevent host cell cycle S-phase progression and create a favorable environment allowing efficient viral genome replication. Participates later in the secondary envelopment of capsids. Indeed, plays a linker role for the association of the outer viral tegument to the capsids together with the inner tegument protein. This Homo sapiens (Human) protein is Large tegument protein deneddylase.